The primary structure comprises 197 residues: Small ribosomal subunit protein eS1 (197 aa).

This sequence belongs to the eukaryotic ribosomal protein eS1 family.

The chain is Small ribosomal subunit protein eS1 from Sulfolobus acidocaldarius (strain ATCC 33909 / DSM 639 / JCM 8929 / NBRC 15157 / NCIMB 11770).